The following is a 156-amino-acid chain: Small ribosomal subunit protein uS7 (156 aa).

The protein belongs to the universal ribosomal protein uS7 family. As to quaternary structure, part of the 30S ribosomal subunit. Contacts proteins S9 and S11.

In terms of biological role, one of the primary rRNA binding proteins, it binds directly to 16S rRNA where it nucleates assembly of the head domain of the 30S subunit. Is located at the subunit interface close to the decoding center, probably blocks exit of the E-site tRNA. The polypeptide is Small ribosomal subunit protein uS7 (Metamycoplasma arthritidis (strain 158L3-1) (Mycoplasma arthritidis)).